The sequence spans 344 residues: Arginine N-succinyltransferase (344 aa).

Position 125 (Leu125) interacts with succinyl-CoA. The active-site Proton donor is the His229.

It belongs to the arginine N-succinyltransferase family.

It catalyses the reaction succinyl-CoA + L-arginine = N(2)-succinyl-L-arginine + CoA + H(+). Its pathway is amino-acid degradation; L-arginine degradation via AST pathway; L-glutamate and succinate from L-arginine: step 1/5. In terms of biological role, catalyzes the transfer of succinyl-CoA to arginine to produce N(2)-succinylarginine. This Escherichia coli O157:H7 protein is Arginine N-succinyltransferase.